Consider the following 450-residue polypeptide: MLKYFGTDGVRGEANKVLTPEMAFKLGRMGGYVLTKEKEDGGQARVLVSRDTRISGEMLEHALISGLLSVGIEVLECGVMTTPGLSYLVQAQGADAGVQISASHNPVEDNGIKFFGSNGLKLSDAKEEEIEELIDTKQDMLPRPSAEGLGTVTDFRDGSNKYIQFLENTIPEDLSGIKVVIDGANGAASAFISRLFADLDVDFTTISTHLNGLNINDHCGATHTARLQEEVVKQGAQLGLAFDGDADRCIAVDENGNEVDGDHIMYVIGSYLADHGRLKKDTIVTTVMSNLGFTKALERRGIKNVRTQVGDRYVSEEMRANGYSLGGEQSGHVIISDYHNTGDGMLTGLHLMLVMKKTGKSLTELLADFKEYPQVLVNVPVKDKNSWKNHQAVVDAIDSVEKDMAGNGRVLVRPSGTQELLRVMAEGPTQEITQEYVDRIVKVVTTEMGE.

S103 acts as the Phosphoserine intermediate in catalysis. Residues S103, D243, D245, and D247 each coordinate Mg(2+). S103 is subject to Phosphoserine.

It belongs to the phosphohexose mutase family. The cofactor is Mg(2+). In terms of processing, activated by phosphorylation.

The enzyme catalyses alpha-D-glucosamine 1-phosphate = D-glucosamine 6-phosphate. Catalyzes the conversion of glucosamine-6-phosphate to glucosamine-1-phosphate. The chain is Phosphoglucosamine mutase from Lactobacillus delbrueckii subsp. bulgaricus (strain ATCC 11842 / DSM 20081 / BCRC 10696 / JCM 1002 / NBRC 13953 / NCIMB 11778 / NCTC 12712 / WDCM 00102 / Lb 14).